The following is a 140-amino-acid chain: Small ribosomal subunit protein uS12 (140 aa).

The segment at 33–55 (KEQTNVSSPQKRGVCTRVGTMTP) is disordered. D102 is subject to 3-methylthioaspartic acid.

The protein belongs to the universal ribosomal protein uS12 family. In terms of assembly, part of the 30S ribosomal subunit. Contacts proteins S8 and S17. May interact with IF1 in the 30S initiation complex.

With S4 and S5 plays an important role in translational accuracy. Functionally, interacts with and stabilizes bases of the 16S rRNA that are involved in tRNA selection in the A site and with the mRNA backbone. Located at the interface of the 30S and 50S subunits, it traverses the body of the 30S subunit contacting proteins on the other side and probably holding the rRNA structure together. The combined cluster of proteins S8, S12 and S17 appears to hold together the shoulder and platform of the 30S subunit. In Geobacillus thermodenitrificans (strain NG80-2), this protein is Small ribosomal subunit protein uS12.